Here is a 680-residue protein sequence, read N- to C-terminus: SH3 domain-binding protein 1 (680 aa).

The segment covering 1–11 has biased composition (basic residues); the sequence is MMKRQLHRMRQ. 2 disordered regions span residues 1 to 24 and 160 to 184; these read MMKR…TPET and SQAA…HTTT. Positions 1–275 are interaction with CGNL1; sequence MMKRQLHRMR…TAAPFSRVYG (275 aa). Positions 81–262 constitute a BAR domain; it reads MAESFKELDP…RDNHSQADHS (182 aa). Residues 160-169 show a composition bias toward polar residues; that stretch reads SQAAKNSGSN. Residues S241 and S262 each carry the phosphoserine modification. The Rho-GAP domain occupies 276–469; the sequence is VSLRTHLQDL…ALIQNADTLF (194 aa). The interaction with CD2AP stretch occupies residues 470-680; it reads PGDINFNVSG…RPRGLISETE (211 aa). A disordered region spans residues 488–680; that stretch reads EKVSSQQVSE…RPRGLISETE (193 aa). Pro residues predominate over residues 502–516; sequence VTVPAPATTPAPTPA. Residue S535 is modified to Phosphoserine. Polar residues predominate over residues 536–546; the sequence is PKVSRNPTETA. Residues 561–571 are compositionally biased toward pro residues; the sequence is PARPTMPPPQP. A Phosphoserine modification is found at S582. Phosphothreonine is present on T592. The SH3-binding motif lies at 607 to 616; it reads APTMPPPLPP. Residues 609–621 are compositionally biased toward pro residues; that stretch reads TMPPPLPPVPPQP. S632 bears the Phosphoserine mark. The segment covering 660–671 has biased composition (pro residues); that stretch reads HPPPPALPPQPR.

Interacts with RAC1. Interacts with the exocyst via EXOC4 and EXOC8; required for the localization of both SH3BP1 and the exocyst to the leading edge of migrating cells. Interacts with CD2AP and CGNL1; probably part of a complex at cell junctions. Interacts with CAPZA1; recruits CAPZA1 to forming cell junctions. May interact with AFDN. Interacts with PLXND1; they dissociate upon SEMA3E binding to PLXND1 allowing SH3BP1 to transduce downstream signal through RAC1 inactivation. Interacts with ABL1, GRB2 and SRC (via SH3 domain). In terms of tissue distribution, expressed in all tissues examined. Highest levels found in spleen and brain, lowest in heart and liver.

It is found in the cell projection. Its subcellular location is the cell junction. The protein resides in the tight junction. It localises to the adherens junction. The protein localises to the phagocytic cup. It is found in the nucleus. Its subcellular location is the cytoplasm. The protein resides in the cytosol. Functionally, GTPase activating protein (GAP) which specifically converts GTP-bound Rho-type GTPases including RAC1 and CDC42 in their inactive GDP-bound form. By specifically inactivating RAC1 at the leading edge of migrating cells, it regulates the spatiotemporal organization of cell protrusions which is important for proper cell migration. Also negatively regulates CDC42 in the process of actin remodeling and the formation of epithelial cell junctions. Through its GAP activity toward RAC1 and/or CDC42 plays a specific role in phagocytosis of large particles. Specifically recruited by a PI3 kinase/PI3K-dependent mechanism to sites of large particles engagement, inactivates RAC1 and/or CDC42 allowing the reorganization of the underlying actin cytoskeleton required for engulfment. It also plays a role in angiogenesis and the process of repulsive guidance as part of a semaphorin-plexin signaling pathway. Following the binding of PLXND1 to extracellular SEMA3E it dissociates from PLXND1 and inactivates RAC1, inducing the intracellular reorganization of the actin cytoskeleton and the collapse of cells. In Mus musculus (Mouse), this protein is SH3 domain-binding protein 1.